Reading from the N-terminus, the 140-residue chain is Putative nickel-responsive regulator (140 aa).

Positions 76, 87, 89, and 95 each coordinate Ni(2+).

It belongs to the transcriptional regulatory CopG/NikR family. It depends on Ni(2+) as a cofactor.

Transcriptional regulator. This is Putative nickel-responsive regulator from Rhodopseudomonas palustris (strain BisB5).